A 267-amino-acid polypeptide reads, in one-letter code: Proteasome subunit alpha (267 aa).

The tract at residues 231–267 (ETLLQERDSKESAESEEPKESEEGKKTGKKSDADSSD) is disordered. The span at 234–267 (LQERDSKESAESEEPKESEEGKKTGKKSDADSSD) shows a compositional bias: basic and acidic residues.

Belongs to the peptidase T1A family. As to quaternary structure, the 20S proteasome core is composed of 14 alpha and 14 beta subunits that assemble into four stacked heptameric rings, resulting in a barrel-shaped structure. The two inner rings, each composed of seven catalytic beta subunits, are sandwiched by two outer rings, each composed of seven alpha subunits. The catalytic chamber with the active sites is on the inside of the barrel. Has a gated structure, the ends of the cylinder being occluded by the N-termini of the alpha-subunits. Is capped by the proteasome-associated ATPase, ARC.

Its subcellular location is the cytoplasm. It functions in the pathway protein degradation; proteasomal Pup-dependent pathway. The formation of the proteasomal ATPase ARC-20S proteasome complex, likely via the docking of the C-termini of ARC into the intersubunit pockets in the alpha-rings, may trigger opening of the gate for substrate entry. Interconversion between the open-gate and close-gate conformations leads to a dynamic regulation of the 20S proteasome proteolysis activity. Component of the proteasome core, a large protease complex with broad specificity involved in protein degradation. In Mycobacterium marinum (strain ATCC BAA-535 / M), this protein is Proteasome subunit alpha.